The sequence spans 293 residues: Bifunctional protein FolD (293 aa).

Residues 165–167, threonine 192, and valine 233 contribute to the NADP(+) site; that span reads GRG.

The protein belongs to the tetrahydrofolate dehydrogenase/cyclohydrolase family. Homodimer.

It carries out the reaction (6R)-5,10-methylene-5,6,7,8-tetrahydrofolate + NADP(+) = (6R)-5,10-methenyltetrahydrofolate + NADPH. The enzyme catalyses (6R)-5,10-methenyltetrahydrofolate + H2O = (6R)-10-formyltetrahydrofolate + H(+). It functions in the pathway one-carbon metabolism; tetrahydrofolate interconversion. Its function is as follows. Catalyzes the oxidation of 5,10-methylenetetrahydrofolate to 5,10-methenyltetrahydrofolate and then the hydrolysis of 5,10-methenyltetrahydrofolate to 10-formyltetrahydrofolate. This chain is Bifunctional protein FolD, found in Streptomyces griseus subsp. griseus (strain JCM 4626 / CBS 651.72 / NBRC 13350 / KCC S-0626 / ISP 5235).